A 1137-amino-acid chain; its full sequence is MASRPAASSPVEARAPVGGQEAGGPSAATQGEAAGAPLAHGHHVYCQRVNGVMVLSDKTPGSASYRISDNNFVQCGSNCTMIIDGDVVRGRPQDPGAAASPAPFVAVTNIGAGSDGGTAVVAFGGTPRRSAGTSTGTQTADVPTEALGGPPPPPRFTLGGGCCSCRDTRRRSAVFGGEGDPVGPAEFVSDDRSSDSDSDDSEDTDSETLSHASSDVSGGATYDDALDSDSSSDDSLQIDGPVCRPWSNDTAPLDVCPGTPGPGADAGGPSAVDPHAPTPEAGAGLAADPAVARDDAEGLSDPRPRLGTGTAYPVPLELTPENAEAVARFLGDAVNREPALMLEYFCRCAREETKRVPPRTFGSPPRLTEDDFGLLNYALVEMQRLCLDVPPVPPNAYMPYYLREYVTRLVNGFKPLVSRSARLYRILGVLVHLRIRTREASFEEWLRSKEVALDFGLTERLREHEAQLVILAQALDHYDCLIHSTPHTLVERGLQSALKYEEFYLKRFGGHYMESVFQMYTRIAGFLACRATRGMRHIALGREGSWWEMFKFFFHRLYDHQIVPSTPAMLNLGTRNYYTSSCYLVNPQATTNKATLRAITSNVSAILARNGGIGLCVQAFNDSGPGTASVMPALKVLDSLVAAHNKESARPTGACVYLEPWHTDVRAVLRMKGVLAGEEAQRCDNIFSALWMPDLFFKRLIRHLDGEKNVTWTLFDRDTSMSLADFHGEEFEKLYQHLEVMGFGEQIPIQELAYGIVRSAATTGSPFVMFKDAVNRHYIYDTQGAAIAGSNLCTEIVHPASKRSSGVCNLGSVNLARCVSRQTFDFGRLRDAVQACVLMVNIMIDSTLQPTPQCTRGNDNLRSMGIGMQGLHTACLKLGLDLESAEFQDLNKHIAEVMLLSAMKTSNALCVRGARPFNHFKRSMYRAGRFHWERFPDARPRYEGEWEMLRQSMMKHGLRNSQFVALMPTAASAQISDVSEGFAPLFTNLFSKVTRDGETLRPNTLLLKELERTFSGKRLLEVMDSLDAKQWSVAQALPCLEPTHPLRRFKTAFDYDQKLLIDLCADRAPYVDHSQSMTLYVTEKADGTLPASTLVRLLVHAYKRGLKTGMYYCKVRKATNSGVFGGDDNIVCMSCAL.

Positions 1 to 32 are disordered; it reads MASRPAASSPVEARAPVGGQEAGGPSAATQGE. The short motif at 64–84 is the RIP homotypic interaction motif (RHIM) element; it reads SYRISDNNFVQCGSNCTMIID. Disordered regions lie at residues 124 to 159 and 173 to 315; these read GGTP…FTLG and AVFG…YPVP. Residues 131–141 show a composition bias toward polar residues; sequence AGTSTGTQTAD. Positions 196-206 are enriched in acidic residues; the sequence is SDSDDSEDTDS. The segment covering 281-290 has biased composition (low complexity); sequence AGAGLAADPA. Positions 291–304 are enriched in basic and acidic residues; sequence VARDDAEGLSDPRP. Substrate-binding positions include threonine 566, 581 to 582, glycine 612, 791 to 795, and 968 to 972; these read SC, NLCTE, and PTAAS. Cysteine 582 and cysteine 808 are disulfide-bonded. The active-site Proton acceptor is asparagine 791. Cysteine 793 functions as the Cysteine radical intermediate in the catalytic mechanism. Glutamate 795 functions as the Proton acceptor in the catalytic mechanism.

The protein belongs to the ribonucleoside diphosphate reductase large chain family. Heterotetramer composed of a homodimer of the large subunit (R1) and a homodimer of the small subunit (R2). Larger multisubunit protein complex are also active, composed of (R1)n(R2)n. Self-assembles (via RIP homotypic interaction motif/RHIM) into homomeric fibrillar amyloid structures. Interacts (via RHIM) with human RIPK1 (via RHIM). Interacts (via RHIM) with human RIPK3 (via RHIM); the interaction leads to heteromeric amyloid assemblies. Interacts (via RHIM) with human ZBP1 (via RHIM); the interaction leads to heteromeric amyloid assemblies. Interacts (via C-terminus) with host CASP8.

It carries out the reaction a 2'-deoxyribonucleoside 5'-diphosphate + [thioredoxin]-disulfide + H2O = a ribonucleoside 5'-diphosphate + [thioredoxin]-dithiol. Its function is as follows. Ribonucleoside-diphosphate reductase holoenzyme that provides the precursors necessary for viral DNA synthesis. Allows virus growth in non-dividing cells, as well as reactivation from latency in infected hosts. Catalyzes the biosynthesis of deoxyribonucleotides from the corresponding ribonucleotides. Prevents host necroptosis by targeting host RIPK1 and RIPK3, thereby hampering the formation of necroptotic RIPK1-RIPK3 complexes. Forms hetero-amyloid structures with host proteins RIPK3 or ZBP1 which may prevent RIPK3- and ZBP1-mediated necroptosis. In addition, inhibits extrinsic apoptosis by targeting host CASP8. The polypeptide is Ribonucleoside-diphosphate reductase large subunit (Human herpesvirus 1 (strain 17) (HHV-1)).